A 129-amino-acid chain; its full sequence is NADH-ubiquinone oxidoreductase chain 3 (129 aa).

A run of 3 helical transmembrane segments spans residues 4–24, 48–68, and 82–102; these read FYMY…WLLA, AAFS…DLEI, and GLYG…AFIL.

It belongs to the complex I subunit 3 family.

Its subcellular location is the mitochondrion membrane. It carries out the reaction a ubiquinone + NADH + 5 H(+)(in) = a ubiquinol + NAD(+) + 4 H(+)(out). In terms of biological role, core subunit of the mitochondrial membrane respiratory chain NADH dehydrogenase (Complex I) that is believed to belong to the minimal assembly required for catalysis. Complex I functions in the transfer of electrons from NADH to the respiratory chain. The immediate electron acceptor for the enzyme is believed to be ubiquinone. The chain is NADH-ubiquinone oxidoreductase chain 3 (NAD3) from Candida albicans (strain SC5314 / ATCC MYA-2876) (Yeast).